The chain runs to 215 residues: Nucleoside triphosphate pyrophosphatase (215 aa).

The active-site Proton acceptor is the Asp-80.

It belongs to the Maf family. A divalent metal cation is required as a cofactor.

The protein localises to the cytoplasm. It catalyses the reaction a ribonucleoside 5'-triphosphate + H2O = a ribonucleoside 5'-phosphate + diphosphate + H(+). The enzyme catalyses a 2'-deoxyribonucleoside 5'-triphosphate + H2O = a 2'-deoxyribonucleoside 5'-phosphate + diphosphate + H(+). Nucleoside triphosphate pyrophosphatase. May have a dual role in cell division arrest and in preventing the incorporation of modified nucleotides into cellular nucleic acids. The sequence is that of Nucleoside triphosphate pyrophosphatase from Leifsonia xyli subsp. xyli (strain CTCB07).